Here is a 363-residue protein sequence, read N- to C-terminus: Flagellar P-ring protein 2 (363 aa).

A signal peptide spans 1–18 (MLIRLLLLVICLAGPGVA).

Belongs to the FlgI family. The basal body constitutes a major portion of the flagellar organelle and consists of four rings (L,P,S, and M) mounted on a central rod.

It localises to the periplasm. The protein localises to the bacterial flagellum basal body. Functionally, assembles around the rod to form the L-ring and probably protects the motor/basal body from shearing forces during rotation. This Cereibacter sphaeroides (strain ATCC 17023 / DSM 158 / JCM 6121 / CCUG 31486 / LMG 2827 / NBRC 12203 / NCIMB 8253 / ATH 2.4.1.) (Rhodobacter sphaeroides) protein is Flagellar P-ring protein 2.